The chain runs to 189 residues: Apolipoprotein D (189 aa).

The signal sequence occupies residues 1–20; the sequence is MGMMLLLLSMLAGLVAEAEG. Position 21 is a pyrrolidone carboxylic acid (Gln-21). Intrachain disulfides connect Cys-28-Cys-134 and Cys-61-Cys-185. N-linked (GlcNAc...) asparagine glycans are attached at residues Asn-65 and Asn-98.

It belongs to the calycin superfamily. Lipocalin family. In terms of assembly, homodimer.

It is found in the secreted. APOD occurs in the macromolecular complex with lecithin-transport and binding of bilin. Appears to be able to transport a variety of ligands in a number of different contexts. This chain is Apolipoprotein D (APOD), found in Cavia porcellus (Guinea pig).